A 281-amino-acid polypeptide reads, in one-letter code: Digeranylgeranylglyceryl phosphate synthase (281 aa).

Transmembrane regions (helical) follow at residues 7–27, 32–52, 72–91, 95–117, 128–148, 193–213, 214–234, and 258–278; these read ILRP…ALIT, FSVL…NVIN, GRIS…ALAS, FYLG…YYAW, ITIS…LGEV, ISGV…PSLY, LLGI…AVFL, and VGMA…TALT.

Belongs to the UbiA prenyltransferase family. DGGGP synthase subfamily. Mg(2+) serves as cofactor.

It is found in the cell membrane. It catalyses the reaction sn-3-O-(geranylgeranyl)glycerol 1-phosphate + (2E,6E,10E)-geranylgeranyl diphosphate = 2,3-bis-O-(geranylgeranyl)-sn-glycerol 1-phosphate + diphosphate. It functions in the pathway membrane lipid metabolism; glycerophospholipid metabolism. In terms of biological role, prenyltransferase that catalyzes the transfer of the geranylgeranyl moiety of geranylgeranyl diphosphate (GGPP) to the C2 hydroxyl of (S)-3-O-geranylgeranylglyceryl phosphate (GGGP). This reaction is the second ether-bond-formation step in the biosynthesis of archaeal membrane lipids. The chain is Digeranylgeranylglyceryl phosphate synthase from Methanothermobacter thermautotrophicus (strain ATCC 29096 / DSM 1053 / JCM 10044 / NBRC 100330 / Delta H) (Methanobacterium thermoautotrophicum).